Reading from the N-terminus, the 226-residue chain is MSKGPGLFADIGKYAKDLLTRDYSTDQKFSISTNSVSGVALTSTALKNGVLHAANVATQYKYRNTFFDVKIDTDFNVKSLVYPMNKFVSIDHNTLTGYDTTSRTFTKYNVGVSVTKPDQCVSIILGDKGDSIKASYVYYLDESTRSATVGEVIRKISTNETTVTVGGLYAVDHLTNVKAKLNSNGKFGALLQHEGLPKSIVTISGEIDTKTLDKYPRLGLSLSLKP.

The protein belongs to the eukaryotic mitochondrial porin (TC 1.B.8.1) family.

Its subcellular location is the mitochondrion outer membrane. Functionally, putative channel that allows diffusion of small hydrophilic molecules through membranes. The protein is Putative mitochondrial outer membrane protein porin 5 (VDAC5) of Arabidopsis thaliana (Mouse-ear cress).